A 409-amino-acid chain; its full sequence is tRNA-specific 2-thiouridylase MnmA (409 aa).

ATP contacts are provided by residues 20–27 and leucine 46; that span reads AMSGGVDS. The active-site Nucleophile is cysteine 114. A disulfide bridge connects residues cysteine 114 and cysteine 210. Glycine 138 is a binding site for ATP. The interval 160-162 is interaction with tRNA; it reads RDQ. Cysteine 210 functions as the Cysteine persulfide intermediate in the catalytic mechanism.

It belongs to the MnmA/TRMU family.

Its subcellular location is the cytoplasm. The catalysed reaction is S-sulfanyl-L-cysteinyl-[protein] + uridine(34) in tRNA + AH2 + ATP = 2-thiouridine(34) in tRNA + L-cysteinyl-[protein] + A + AMP + diphosphate + H(+). Functionally, catalyzes the 2-thiolation of uridine at the wobble position (U34) of tRNA, leading to the formation of s(2)U34. The polypeptide is tRNA-specific 2-thiouridylase MnmA (Bartonella henselae (strain ATCC 49882 / DSM 28221 / CCUG 30454 / Houston 1) (Rochalimaea henselae)).